A 232-amino-acid polypeptide reads, in one-letter code: Proteasome subunit alpha (232 aa).

This sequence belongs to the peptidase T1A family. The 20S proteasome core is composed of 14 alpha and 14 beta subunits that assemble into four stacked heptameric rings, resulting in a barrel-shaped structure. The two inner rings, each composed of seven catalytic beta subunits, are sandwiched by two outer rings, each composed of seven alpha subunits. The catalytic chamber with the active sites is on the inside of the barrel. Has a gated structure, the ends of the cylinder being occluded by the N-termini of the alpha-subunits. Is capped by the proteasome-associated ATPase, ARC.

Its subcellular location is the cytoplasm. The protein operates within protein degradation; proteasomal Pup-dependent pathway. Its activity is regulated as follows. The formation of the proteasomal ATPase ARC-20S proteasome complex, likely via the docking of the C-termini of ARC into the intersubunit pockets in the alpha-rings, may trigger opening of the gate for substrate entry. Interconversion between the open-gate and close-gate conformations leads to a dynamic regulation of the 20S proteasome proteolysis activity. Component of the proteasome core, a large protease complex with broad specificity involved in protein degradation. This is Proteasome subunit alpha from Acidimicrobium ferrooxidans (strain DSM 10331 / JCM 15462 / NBRC 103882 / ICP).